Consider the following 263-residue polypeptide: UPF0758 protein NGR_c13970 (263 aa).

An MPN domain is found at 141–263; it reads VLSSWSAVID…HVSMKGLRLF (123 aa). Residues His212, His214, and Asp225 each coordinate Zn(2+). Residues 212 to 225 carry the JAMM motif motif; it reads HNHPSGDPTPSRAD.

This sequence belongs to the UPF0758 family.

The sequence is that of UPF0758 protein NGR_c13970 from Sinorhizobium fredii (strain NBRC 101917 / NGR234).